The following is a 368-amino-acid chain: Methionine import ATP-binding protein MetN (368 aa).

Over residues 1 to 14 (MASDAQPSVDQPSA) the composition is skewed to polar residues. Residues 1 to 27 (MASDAQPSVDQPSAGTPGATGNSTGTT) are disordered. Positions 15-27 (GTPGATGNSTGTT) are enriched in low complexity. One can recognise an ABC transporter domain in the interval 31 to 270 (IVFRDVTKIF…PQTKTAANFV (240 aa)). Residue 67–74 (GYSGAGKS) participates in ATP binding.

It belongs to the ABC transporter superfamily. Methionine importer (TC 3.A.1.24) family. The complex is composed of two ATP-binding proteins (MetN), two transmembrane proteins (MetI) and a solute-binding protein (MetQ).

The protein resides in the cell membrane. It catalyses the reaction L-methionine(out) + ATP + H2O = L-methionine(in) + ADP + phosphate + H(+). The catalysed reaction is D-methionine(out) + ATP + H2O = D-methionine(in) + ADP + phosphate + H(+). In terms of biological role, part of the ABC transporter complex MetNIQ involved in methionine import. Responsible for energy coupling to the transport system. The polypeptide is Methionine import ATP-binding protein MetN (Corynebacterium jeikeium (strain K411)).